A 283-amino-acid polypeptide reads, in one-letter code: Cell differentiation protein rcd1 (283 aa).

Belongs to the CNOT9 family.

In terms of biological role, a differentiation-controlling factor that is essential for the onset of sexual development. Induces ste11 when sexual development is invoked through nitrogen starvation. The chain is Cell differentiation protein rcd1 (rcd1) from Schizosaccharomyces pombe (strain 972 / ATCC 24843) (Fission yeast).